The sequence spans 238 residues: Ribonuclease Rh (238 aa).

The signal sequence occupies residues 1–16 (MKAVLALATLIGSTLA). Disulfide bonds link Cys-19-Cys-36, Cys-26-Cys-69, Cys-35-Cys-136, Cys-79-Cys-128, and Cys-198-Cys-229. Residues His-62, Glu-121, and His-125 contribute to the active site.

The protein belongs to the RNase T2 family.

The catalysed reaction is a ribonucleotidyl-ribonucleotide-RNA + H2O = a 3'-end 3'-phospho-ribonucleotide-RNA + a 5'-end dephospho-ribonucleoside-RNA + H(+). This is a base non-specific ribonuclease. The protein is Ribonuclease Rh of Rhizopus niveus.